The primary structure comprises 388 residues: MKKIFLSVGEISGDNYASELAKHLKEYQITGITGPKMRAIGVKPVANLEDISVVGLTEALSKYKKIKEVFKQSVQALKSGVDLLIVVDFPGFNIKLLKEAKKLGIKTVYFISPQVWAWGSGRVKEIVENTDLLISILPFEEEIYKPYVSDKFKFAYVGHPLLDIIKIYENEDSFKQKLNIPKNKRIIGLLAGSRESEVNVILPILIEAARLLTKTFDDLHFVIPATVNMVDRVLEKVNFSLPITVITSNLSDKNLPKFENPSYEVMKNAVFSIITSGTATLEAAIIGNPFIIVYKVSPITYFIGKKLVKINYLGLPNIIAGNEIVPELLQDRCNPLDIANKTLEFLTDKNLYKTQKRNLEIVRKSLGKKGAIERASNLIRTLLEKGQA.

It belongs to the LpxB family.

It catalyses the reaction a lipid X + a UDP-2-N,3-O-bis[(3R)-3-hydroxyacyl]-alpha-D-glucosamine = a lipid A disaccharide + UDP + H(+). Its pathway is bacterial outer membrane biogenesis; LPS lipid A biosynthesis. Its function is as follows. Condensation of UDP-2,3-diacylglucosamine and 2,3-diacylglucosamine-1-phosphate to form lipid A disaccharide, a precursor of lipid A, a phosphorylated glycolipid that anchors the lipopolysaccharide to the outer membrane of the cell. The polypeptide is Lipid-A-disaccharide synthase (Sulfurihydrogenibium sp. (strain YO3AOP1)).